The sequence spans 514 residues: Pantothenate transporter liz1 (514 aa).

The next 12 membrane-spanning stretches (helical) occupy residues 24 to 44 (LLIK…FINY), 72 to 92 (INVV…YALQ), 98 to 118 (LWFS…FAVH), 128 to 148 (FFMA…LGAW), 159 to 179 (GIFS…QTAV), 194 to 214 (WLFI…LFLF), 263 to 283 (GLCI…NVLM), 300 to 320 (NYPT…SVIS), 329 to 349 (WPFG…LLAW), 357 to 377 (FFAY…FSWA), 390 to 410 (VVVF…APIM), and 423 to 443 (LIGL…VSYM).

This sequence belongs to the major facilitator superfamily. Allantoate permease family.

The protein localises to the cell membrane. Functionally, transports pantothenate into the cell. This Schizosaccharomyces pombe (strain 972 / ATCC 24843) (Fission yeast) protein is Pantothenate transporter liz1 (liz1).